A 215-amino-acid chain; its full sequence is Cytochrome b6 (215 aa).

The chain crosses the membrane as a helical span at residues 32–52 (IFYCLGGITFTCFIIQVATGF). Heme c is bound at residue Cys-35. Heme b is bound by residues His-86 and His-100. 3 consecutive transmembrane segments (helical) span residues 90 to 110 (ASMM…TGGF), 116 to 136 (LTWV…VTGY), and 186 to 206 (LHTF…FLMI). The heme b site is built by His-187 and His-202.

The protein belongs to the cytochrome b family. PetB subfamily. The 4 large subunits of the cytochrome b6-f complex are cytochrome b6, subunit IV (17 kDa polypeptide, PetD), cytochrome f and the Rieske protein, while the 4 small subunits are PetG, PetL, PetM and PetN. The complex functions as a dimer. The cofactor is heme b. Heme c serves as cofactor.

The protein resides in the plastid. It is found in the chloroplast thylakoid membrane. Its function is as follows. Component of the cytochrome b6-f complex, which mediates electron transfer between photosystem II (PSII) and photosystem I (PSI), cyclic electron flow around PSI, and state transitions. This Euglena gracilis protein is Cytochrome b6.